Consider the following 158-residue polypeptide: Deoxyuridine 5'-triphosphate nucleotidohydrolase (158 aa).

Substrate is bound by residues 66 to 68, Asn79, 83 to 85, and Lys93; these read RSG and TID. A disordered region spans residues 139-158; that stretch reads RGFGSSGVARKGHYQGKPLA.

The protein belongs to the dUTPase family. It depends on Mg(2+) as a cofactor.

The catalysed reaction is dUTP + H2O = dUMP + diphosphate + H(+). The protein operates within pyrimidine metabolism; dUMP biosynthesis; dUMP from dCTP (dUTP route): step 2/2. This enzyme is involved in nucleotide metabolism: it produces dUMP, the immediate precursor of thymidine nucleotides and it decreases the intracellular concentration of dUTP so that uracil cannot be incorporated into DNA. This is Deoxyuridine 5'-triphosphate nucleotidohydrolase from Helicobacter hepaticus (strain ATCC 51449 / 3B1).